The following is a 434-amino-acid chain: Threonylcarbamoyladenosine tRNA methylthiotransferase MtaB (434 aa).

The 111-residue stretch at 2-112 (KTVRIETFGC…IVDHINSLNG (111 aa)) folds into the MTTase N-terminal domain. [4Fe-4S] cluster-binding residues include C11, C46, C77, C147, C151, and C154. In terms of domain architecture, Radical SAM core spans 133 to 362 (FEDRTRSYIK…KEKAKDVSIR (230 aa)).

The protein belongs to the methylthiotransferase family. MtaB subfamily. [4Fe-4S] cluster serves as cofactor.

Its subcellular location is the cytoplasm. It catalyses the reaction N(6)-L-threonylcarbamoyladenosine(37) in tRNA + (sulfur carrier)-SH + AH2 + 2 S-adenosyl-L-methionine = 2-methylsulfanyl-N(6)-L-threonylcarbamoyladenosine(37) in tRNA + (sulfur carrier)-H + 5'-deoxyadenosine + L-methionine + A + S-adenosyl-L-homocysteine + 2 H(+). In terms of biological role, catalyzes the methylthiolation of N6-threonylcarbamoyladenosine (t(6)A), leading to the formation of 2-methylthio-N6-threonylcarbamoyladenosine (ms(2)t(6)A) at position 37 in tRNAs that read codons beginning with adenine. This Thermotoga maritima (strain ATCC 43589 / DSM 3109 / JCM 10099 / NBRC 100826 / MSB8) protein is Threonylcarbamoyladenosine tRNA methylthiotransferase MtaB (mtaB).